Here is a 343-residue protein sequence, read N- to C-terminus: Programmed cell death protein 2 (343 aa).

8 residues coordinate Zn(2+): Cys-134, Cys-137, Cys-145, Cys-148, Cys-154, His-158, His-167, and Cys-171. Residues 134–171 (CRVCGCLAPMTCSRCKQAHYCSKEHQTLDWQLGHKQAC) form an MYND-type; atypical zinc finger.

Ubiquitinated by PRKN, promoting proteasomal degradation.

The protein resides in the nucleus. In terms of biological role, may be a DNA-binding protein with a regulatory function. May play an important role in cell death and/or in regulation of cell proliferation. In Rattus norvegicus (Rat), this protein is Programmed cell death protein 2 (Pdcd2).